The primary structure comprises 682 residues: Probable potassium transport system protein Kup (682 aa).

A run of 12 helical transmembrane segments spans residues 13–33 (GLLV…LYVM), 55–75 (ISLI…LIAL), 98–118 (WLVI…TLTP), 138–158 (IPVP…LFLF), 171–191 (TFGP…IMNL), 217–237 (VGVL…ALYS), 250–270 (SWPY…VWIL), 295–315 (FFAI…LITG), 344–364 (LFIP…VFLF), 375–395 (GLAI…YLSL), 405–425 (VFLL…LAKF), and 428–448 (GGYV…IWYF).

This sequence belongs to the HAK/KUP transporter (TC 2.A.72) family.

It is found in the cell membrane. It catalyses the reaction K(+)(in) + H(+)(in) = K(+)(out) + H(+)(out). Transport of potassium into the cell. Likely operates as a K(+):H(+) symporter. This is Probable potassium transport system protein Kup from Lactobacillus gasseri (strain ATCC 33323 / DSM 20243 / BCRC 14619 / CIP 102991 / JCM 1131 / KCTC 3163 / NCIMB 11718 / NCTC 13722 / AM63).